Reading from the N-terminus, the 158-residue chain is 6,7-dimethyl-8-ribityllumazine synthase (158 aa).

5-amino-6-(D-ribitylamino)uracil contacts are provided by residues phenylalanine 23, 61 to 63, and 85 to 87; these read SFE and AVI. A (2S)-2-hydroxy-3-oxobutyl phosphate-binding site is contributed by 90 to 91; it reads ET. The active-site Proton donor is the histidine 93. 5-amino-6-(D-ribitylamino)uracil is bound at residue phenylalanine 118. Arginine 132 lines the (2S)-2-hydroxy-3-oxobutyl phosphate pocket.

The protein belongs to the DMRL synthase family.

The enzyme catalyses (2S)-2-hydroxy-3-oxobutyl phosphate + 5-amino-6-(D-ribitylamino)uracil = 6,7-dimethyl-8-(1-D-ribityl)lumazine + phosphate + 2 H2O + H(+). The protein operates within cofactor biosynthesis; riboflavin biosynthesis; riboflavin from 2-hydroxy-3-oxobutyl phosphate and 5-amino-6-(D-ribitylamino)uracil: step 1/2. In terms of biological role, catalyzes the formation of 6,7-dimethyl-8-ribityllumazine by condensation of 5-amino-6-(D-ribitylamino)uracil with 3,4-dihydroxy-2-butanone 4-phosphate. This is the penultimate step in the biosynthesis of riboflavin. The polypeptide is 6,7-dimethyl-8-ribityllumazine synthase (Prochlorococcus marinus (strain MIT 9301)).